The following is a 257-amino-acid chain: NAD kinase (257 aa).

The active-site Proton acceptor is Asp-44. NAD(+) is bound by residues 44-45 (DG), Arg-49, 116-117 (NE), Asp-146, Ala-154, and 157-162 (TAYNLS).

The protein belongs to the NAD kinase family. The cofactor is a divalent metal cation.

It is found in the cytoplasm. It catalyses the reaction NAD(+) + ATP = ADP + NADP(+) + H(+). Functionally, involved in the regulation of the intracellular balance of NAD and NADP, and is a key enzyme in the biosynthesis of NADP. Catalyzes specifically the phosphorylation on 2'-hydroxyl of the adenosine moiety of NAD to yield NADP. In Rhizorhabdus wittichii (strain DSM 6014 / CCUG 31198 / JCM 15750 / NBRC 105917 / EY 4224 / RW1) (Sphingomonas wittichii), this protein is NAD kinase.